Here is a 222-residue protein sequence, read N- to C-terminus: Elongation factor 1-beta' (222 aa).

The interval 71–113 (SQGTSPLTAGAKPTAPAPAAKDDDDDDVDLFGSGDEEEDAEAE) is disordered. Low complexity predominate over residues 78–89 (TAGAKPTAPAPA). Acidic residues predominate over residues 92–111 (DDDDDDVDLFGSGDEEEDAE).

This sequence belongs to the EF-1-beta/EF-1-delta family. In terms of assembly, EF-1 is composed of 4 subunits: alpha, beta, beta' and gamma. In terms of processing, phosphorylated.

EF-1-beta and EF-1-beta' stimulate the exchange of GDP bound to EF-1-alpha to GTP. The protein is Elongation factor 1-beta' of Bombyx mori (Silk moth).